A 477-amino-acid polypeptide reads, in one-letter code: Sensor protein kinase PmrB (477 aa).

2 helical membrane passes run 13-33 and 161-181; these read LLVN…ALTY and LLLF…GGLV. Residues 186 to 238 enclose the HAMP domain; it reads ARGLAPLREVQAEVQQRSARHLQPIAVEAVPLEIRGLIDELNLLLERLRTALE. The region spanning 246-459 is the Histidine kinase domain; it reads DAAHEIRTPL…EVQVFLPKTQ (214 aa). At histidine 249 the chain carries Phosphohistidine; by autocatalysis. Residues 455–477 are disordered; the sequence is LPKTQPDATRPPARGPDSGRSHI.

The protein localises to the membrane. The catalysed reaction is ATP + protein L-histidine = ADP + protein N-phospho-L-histidine.. In terms of biological role, member of the two-component regulatory system PmrA/PmrB that plays a role in the regulation of resistance towards polymyxin B and cationic antimicrobial peptides in response to limiting concentrations of Mg(2+). Also autoregulates its own pmrAB operon under Mg(2+)-limiting conditions. May function as a membrane-associated protein kinase that phosphorylates PmrA in response to environmental signals leading to activation of specific gene promoters. The chain is Sensor protein kinase PmrB (pmrB) from Pseudomonas aeruginosa (strain ATCC 15692 / DSM 22644 / CIP 104116 / JCM 14847 / LMG 12228 / 1C / PRS 101 / PAO1).